We begin with the raw amino-acid sequence, 570 residues long: Peptidyl-prolyl cis-trans isomerase-like 2 (570 aa).

Residues 37–110 form the U-box domain; it reads KRLPFNFCSL…GDYVDPVTYK (74 aa). Disordered regions lie at residues 215–253, 428–449, and 469–570; these read RSER…KPTP, STTL…PTPD, and KKAE…SSWD. Residues 234 to 248 show a composition bias toward low complexity; it reads STTTSTQSKTASFQS. The region spanning 298–457 is the PPIase cyclophilin-type domain; that stretch reads QKGYARISTT…PDIRITDVTI (160 aa). The span at 428-446 shows a compositional bias: polar residues; that stretch reads STTLNNLETHPVNSSTNRP. Positions 469 to 483 are enriched in basic and acidic residues; sequence KKAEEASGKNKKVDP. Acidic residues-rich tracts occupy residues 484-497 and 535-550; these read TEED…DDDQ and QEED…EPEP.

This sequence belongs to the cyclophilin-type PPIase family. PPIL2 subfamily.

Its subcellular location is the nucleus. The enzyme catalyses [protein]-peptidylproline (omega=180) = [protein]-peptidylproline (omega=0). The catalysed reaction is S-ubiquitinyl-[E2 ubiquitin-conjugating enzyme]-L-cysteine + [acceptor protein]-L-lysine = [E2 ubiquitin-conjugating enzyme]-L-cysteine + N(6)-ubiquitinyl-[acceptor protein]-L-lysine.. In terms of biological role, may catalyze the cis-trans isomerization of proline imidic peptide bonds in oligopeptides thereby assisting the folding of proteins. May also function as a chaperone, playing a role in intracellular transport of proteins. May also have a protein ubiquitin ligase activity acting as an E3 ubiquitin protein ligase or as a ubiquitin-ubiquitin ligase promoting elongation of ubiquitin chains on proteins. The sequence is that of Peptidyl-prolyl cis-trans isomerase-like 2 (cyp8) from Aspergillus oryzae (strain ATCC 42149 / RIB 40) (Yellow koji mold).